Consider the following 926-residue polypeptide: MKMKETLQLGKTAFPMRGNLPNREAEWQKDWEEKGLYEQRQKLNEGKPTFVLHDGPPYANGNIHLGHSLNKISKDIIIRSKSMSGFRSPYVPGWDTHGLPIEQVLTNKGVKRKEMTVAEYREKCKEYALSQVDKQRNDFKRLGVSGDWEHPYITLDPEYEAAEIRVFGKMAEKGYIYKGLKPIYWSPSSESSLAEAEIEYKDVKSPSIYVAFNVADGKGLLDNETAFVIWTTTPWTLPANLGISVNPDFTYVEVKADGRKFVIAKDLLTTVKEAIGWEEVEVLREFSGEKLDRMTAQHPFYDRTSLVMLGDHVTLDAGTGLVHTAPGHGEDDYIVSRKYDLPVISPVDSRGVFTDEAPGFEGIFYDKANPMITELLEEKGALLKLDFFTHSYPHDWRTKKPVIYRATPQWFASISKFRQDILDEVEKVDWLIPWGKTRLYNMIRDRGDWVISRQRAWGVPLPIFYAENGEAIITPETIEHVANLFAEHGSNIWFMREAKELLPAGFTHPGSPNGEFTKETDIMDVWFDSGSSHEGVLREREELTFPADMYLEGSDQYRGWFNSSITTSVAINGVAPYKSIISQGMVLDGEGRKMSKSLGNTILPEKVINQMGADILRLWVSSVDAEADVRVSMDILNQVSEVYRKIRNTMRFLLANTSDFNPAEHTVAYADLRSVDKYMTVRLNQVIQEIRENGYEKYNFMHIYRTVMNFLTVDLSSFYLDFAKDVVYIEAENDYQRRCMQTVFYQTLVSLTKLLTPIIPHTAEEIWSFLQEEEEYVQLAEFPGYETFTNEEELMDTWAAFMDFRDNVLKALEEARHSKLIGKSLEAKVTVYPNEQIRQLMTAVDADIAQLLIVSDFEVSKEVAPSEAVQFEDMAILVEKAEGETCDRCRSVRQDVGSDEKLPTLCGRCAHIVEENYPEAVAEGFE.

The tract at residues 1 to 21 (MKMKETLQLGKTAFPMRGNLP) is disordered. Residues 57–67 (PYANGNIHLGH) carry the 'HIGH' region motif. Glu-552 provides a ligand contact to L-isoleucyl-5'-AMP. The 'KMSKS' region signature appears at 593-597 (KMSKS). ATP is bound at residue Lys-596. Residues Cys-886, Cys-889, Cys-906, and Cys-909 each contribute to the Zn(2+) site.

Belongs to the class-I aminoacyl-tRNA synthetase family. IleS type 1 subfamily. Monomer. Requires Zn(2+) as cofactor.

The protein localises to the cytoplasm. The enzyme catalyses tRNA(Ile) + L-isoleucine + ATP = L-isoleucyl-tRNA(Ile) + AMP + diphosphate. Its function is as follows. Catalyzes the attachment of isoleucine to tRNA(Ile). As IleRS can inadvertently accommodate and process structurally similar amino acids such as valine, to avoid such errors it has two additional distinct tRNA(Ile)-dependent editing activities. One activity is designated as 'pretransfer' editing and involves the hydrolysis of activated Val-AMP. The other activity is designated 'posttransfer' editing and involves deacylation of mischarged Val-tRNA(Ile). In Enterococcus faecalis (strain ATCC 700802 / V583), this protein is Isoleucine--tRNA ligase.